The chain runs to 249 residues: U1 small nuclear ribonucleoprotein usp102 (249 aa).

Residues 1-25 (MDPQTNSHQEVQQPSPKETDSQTPS) are disordered. One can recognise an RRM 1 domain in the interval 26-105 (ETLYIRNIEE…KPMMIQYSKS (80 aa)). The interval 113 to 157 (RESPEEIETRKKDRKNRREMLKRTSALQPAAPKPTHKKPVPKRNV) is disordered. Residues 114-134 (ESPEEIETRKKDRKNRREMLK) show a composition bias toward basic and acidic residues. In terms of domain architecture, RRM 2 spans 174 to 247 (KVLLLQNIPQ…NQIKVTFARK (74 aa)).

It belongs to the RRM U1 A/B'' family. As to quaternary structure, component of the spliceosome where it is associated with snRNP U1.

It is found in the nucleus. It localises to the nucleolus. In terms of biological role, involved in nuclear mRNA splicing. The polypeptide is U1 small nuclear ribonucleoprotein usp102 (Schizosaccharomyces pombe (strain 972 / ATCC 24843) (Fission yeast)).